Reading from the N-terminus, the 479-residue chain is FAD-dependent monooxygenase sdcF (479 aa).

The 174-residue stretch at 40–213 (AQLPPSCFVL…TLFDMEAFST (174 aa)) folds into the FAD-binding PCMH-type domain. His-79 bears the Pros-8alpha-FAD histidine mark.

The protein belongs to the oxygen-dependent FAD-linked oxidoreductase family. FAD serves as cofactor.

The protein operates within secondary metabolite biosynthesis. Its function is as follows. FAD-dependent monooxygenase; part of the gene cluster that mediates the biosynthesis of the polyenes aspernidgulenes. The carbon backbone of aspernidgulenes is synthesized by the HR-PKS sdgA, which accepts acetyl-CoA as the starter unit and performs malonyl-CoA extensions as well as regioselective methylation and reduction. The resulting nonaketide offloads the HR-PKS by intramolecular lactonization to yield the 5,6-dihydro-alpha-pyrone-containing hexaenoic acids preaspernidgulene A1 and A2. The FAD-dependent monooxygenase sdgC then installs the first epoxide on the penultimate double bond. Subsequently, the FAD-dependent monooxygenase sdgF presumably generates a ketone intermediate through Meinwald rearrangement involving a hydride shift. Next, sdgC introduces another epoxide on the last olefin of the ketone intermediate after E/Z isomerization. The epoxide hydrolase sdgD then catalyzes stereospecific cyclization of the 5,6-dihydro-alpha-pyrone and opening of the epoxide ring to form an oxygenated trimethylcyclopentanone and an oxabicyclo[2.2.1]heptane unit. Finally, the bicyclic unit undergoes hydrolytic cleavage, either spontaneously or catalyzed by sdgD, to assemble the dimethyl-gamma-lactone moiety in aspernidgulene A1. This chain is FAD-dependent monooxygenase sdcF, found in Emericella nidulans (strain FGSC A4 / ATCC 38163 / CBS 112.46 / NRRL 194 / M139) (Aspergillus nidulans).